Here is a 142-residue protein sequence, read N- to C-terminus: Putative 2'-deoxynucleoside 5'-phosphate N-hydrolase 1 (142 aa).

Residues 4–10 (FFSGSIR), Y19, H36, E82, and 106–108 (SAM) each bind substrate.

Belongs to the 2'-deoxynucleoside 5'-phosphate N-hydrolase 1 family. Monomer and homodimer.

The enzyme catalyses a pyrimidine 2'-deoxyribonucleoside 5'-phosphate + H2O = a pyrimidine nucleobase + 2-deoxy-D-ribose 5-phosphate. It catalyses the reaction a purine 2'-deoxyribonucleoside 5'-phosphate + H2O = a purine nucleobase + 2-deoxy-D-ribose 5-phosphate. Functionally, catalyzes the cleavage of the N-glycosidic bond of deoxyribonucleoside 5'-monophosphates to yield deoxyribose 5-phosphate and a purine or pyrimidine base. This chain is Putative 2'-deoxynucleoside 5'-phosphate N-hydrolase 1, found in Syntrophotalea carbinolica (strain DSM 2380 / NBRC 103641 / GraBd1) (Pelobacter carbinolicus).